Consider the following 158-residue polypeptide: C-type lectin (158 aa).

The signal sequence occupies residues 1–23 (MGHFTFISLCLMPIFLSLSGAEC). 4 disulfides stabilise this stretch: Cys-26/Cys-37, Cys-54/Cys-154, Cys-61/Cys-156, and Cys-129/Cys-146. In terms of domain architecture, C-type lectin spans 33–155 (RNGLCYKLFD…CESLFAFICR (123 aa)). N-linked (GlcNAc...) asparagine glycans are attached at residues Asn-111 and Asn-121. The short motif at 119–121 (EPN) is the Mannose-binding element. Positions 127, 142, and 143 each coordinate Ca(2+).

Belongs to the true venom lectin family. As to quaternary structure, homodimer; non-covalently linked. In terms of tissue distribution, expressed by the venom gland.

Its subcellular location is the secreted. Its function is as follows. Mannose-binding lectin which recognizes specific carbohydrate structures and agglutinates a variety of animal cells by binding to cell-surface glycoproteins and glycolipids. May be a calcium-dependent lectin. This Micrurus corallinus (Brazilian coral snake) protein is C-type lectin.